Reading from the N-terminus, the 79-residue chain is ATP synthase subunit c (79 aa).

A run of 2 helical transmembrane segments spans residues 11-31 (MAAALMMGLAAIGAAIGIGIL) and 53-73 (FFIVMGLVDAIPMIAVGLGLY).

It belongs to the ATPase C chain family. In terms of assembly, F-type ATPases have 2 components, F(1) - the catalytic core - and F(0) - the membrane proton channel. F(1) has five subunits: alpha(3), beta(3), gamma(1), delta(1), epsilon(1). F(0) has three main subunits: a(1), b(2) and c(10-14). The alpha and beta chains form an alternating ring which encloses part of the gamma chain. F(1) is attached to F(0) by a central stalk formed by the gamma and epsilon chains, while a peripheral stalk is formed by the delta and b chains.

The protein resides in the cell inner membrane. Its function is as follows. F(1)F(0) ATP synthase produces ATP from ADP in the presence of a proton or sodium gradient. F-type ATPases consist of two structural domains, F(1) containing the extramembraneous catalytic core and F(0) containing the membrane proton channel, linked together by a central stalk and a peripheral stalk. During catalysis, ATP synthesis in the catalytic domain of F(1) is coupled via a rotary mechanism of the central stalk subunits to proton translocation. Functionally, key component of the F(0) channel; it plays a direct role in translocation across the membrane. A homomeric c-ring of between 10-14 subunits forms the central stalk rotor element with the F(1) delta and epsilon subunits. This Pectobacterium atrosepticum (strain SCRI 1043 / ATCC BAA-672) (Erwinia carotovora subsp. atroseptica) protein is ATP synthase subunit c.